Consider the following 536-residue polypeptide: Lysosomal acid glucosylceramidase (536 aa).

Positions 1–39 (MEFSSPSREECPKPSGRVNIMAGSLTGLLLLQAVSWASG) are cleaved as a signal peptide. Intrachain disulfides connect cysteine 43–cysteine 55 and cysteine 57–cysteine 62. N-linked (GlcNAc...) asparagine glycosylation is found at asparagine 58, asparagine 98, and asparagine 185. The active-site Proton donor is the glutamate 274. An N-linked (GlcNAc...) asparagine glycan is attached at asparagine 309. Catalysis depends on glutamate 379, which acts as the Nucleophile. Asparagine 501 carries an N-linked (GlcNAc...) asparagine glycan.

This sequence belongs to the glycosyl hydrolase 30 family. As to quaternary structure, interacts with saposin-C. Interacts with SCARB2. Interacts with TCP1. Interacts with GRN; this interaction prevents aggregation of GBA1-SCARB2 complex via interaction with HSPA1A upon stress.

It localises to the lysosome membrane. The enzyme catalyses a beta-D-glucosyl-(1&lt;-&gt;1')-N-acylsphing-4-enine + H2O = an N-acylsphing-4-enine + D-glucose. It carries out the reaction a beta-D-galactosyl-(1&lt;-&gt;1')-N-acylsphing-4-enine + H2O = an N-acylsphing-4-enine + D-galactose. It catalyses the reaction cholesteryl 3-beta-D-glucoside + H2O = cholesterol + D-glucose. The catalysed reaction is a beta-D-glucosyl-(1&lt;-&gt;1')-N-acylsphing-4-enine + cholesterol = cholesteryl 3-beta-D-glucoside + an N-acylsphing-4-enine. The enzyme catalyses beta-D-glucosyl-N-(9Z-octadecenoyl)-sphing-4E-enine + cholesterol = N-(9Z-octadecenoyl)-sphing-4-enine + cholesteryl 3-beta-D-glucoside. It carries out the reaction beta-D-glucosyl-N-octanoylsphing-4E-enine + cholesterol = N-octanoylsphing-4-enine + cholesteryl 3-beta-D-glucoside. It catalyses the reaction beta-D-glucosyl-N-dodecanoylsphing-4-enine + cholesterol = N-dodecanoylsphing-4-enine + cholesteryl 3-beta-D-glucoside. The catalysed reaction is beta-D-glucosyl-(1&lt;-&gt;1)-N-octadecanoylsphing-4-enine + cholesterol = N-octadecanoylsphing-4-enine + cholesteryl 3-beta-D-glucoside. The enzyme catalyses beta-D-glucosyl-(1&lt;-&gt;1')-N-(15Z-tetracosenoyl)-sphing-4-enine + cholesterol = N-(15Z-tetracosenoyl)-sphing-4-enine + cholesteryl 3-beta-D-glucoside. It carries out the reaction a beta-D-galactosyl-(1&lt;-&gt;1')-N-acylsphing-4-enine + cholesterol = cholesteryl 3-beta-D-galactoside + an N-acylsphing-4-enine. It catalyses the reaction 1-(beta-D-galactosyl)-N-dodecanoylsphing-4-enine + cholesterol = cholesteryl 3-beta-D-galactoside + N-dodecanoylsphing-4-enine. The catalysed reaction is a beta-D-xylosyl-(1&lt;-&gt;1')-N-acylsphing-4-enine + cholesterol = cholesteryl 3-beta-D-xyloside + an N-acylsphing-4-enine. The enzyme catalyses beta-D-xylosyl-(1&lt;-&gt;1')-N-(9Z-octadecenoyl)-sphing-4-enine + cholesterol = cholesteryl 3-beta-D-xyloside + N-(9Z-octadecenoyl)-sphing-4-enine. The protein operates within steroid metabolism; cholesterol metabolism. It functions in the pathway sphingolipid metabolism. In terms of biological role, glucosylceramidase that catalyzes, within the lysosomal compartment, the hydrolysis of glucosylceramides/GlcCers (such as beta-D-glucosyl-(1&lt;-&gt;1')-N-acylsphing-4-enine) into free ceramides (such as N-acylsphing-4-enine) and glucose. Plays a central role in the degradation of complex lipids and the turnover of cellular membranes. Through the production of ceramides, participates in the PKC-activated salvage pathway of ceramide formation. Catalyzes the glucosylation of cholesterol, through a transglucosylation reaction where glucose is transferred from GlcCer to cholesterol. GlcCer containing mono-unsaturated fatty acids (such as beta-D-glucosyl-N-(9Z-octadecenoyl)-sphing-4-enine) are preferred as glucose donors for cholesterol glucosylation when compared with GlcCer containing same chain length of saturated fatty acids (such as beta-D-glucosyl-N-octadecanoyl-sphing-4-enine). Under specific conditions, may alternatively catalyze the reverse reaction, transferring glucose from cholesteryl 3-beta-D-glucoside to ceramide. Can also hydrolyze cholesteryl 3-beta-D-glucoside producing glucose and cholesterol. Catalyzes the hydrolysis of galactosylceramides/GalCers (such as beta-D-galactosyl-(1&lt;-&gt;1')-N-acylsphing-4-enine), as well as the transfer of galactose between GalCers and cholesterol in vitro, but with lower activity than with GlcCers. Contrary to GlcCer and GalCer, xylosylceramide/XylCer (such as beta-D-xyosyl-(1&lt;-&gt;1')-N-acylsphing-4-enine) is not a good substrate for hydrolysis, however it is a good xylose donor for transxylosylation activity to form cholesteryl 3-beta-D-xyloside. The protein is Lysosomal acid glucosylceramidase (GBA1) of Pongo abelii (Sumatran orangutan).